The sequence spans 336 residues: C4-dicarboxylate-binding periplasmic protein DctP (336 aa).

The first 31 residues, Met1 to Ala31, serve as a signal peptide directing secretion. (S)-malate is bound by residues Lys48, Lys101, Arg176, Asn216, Asn220, and Tyr243. Residues Lys48, Lys101, Arg176, Asn216, Asn220, and Tyr243 each contribute to the succinate site.

The protein belongs to the bacterial solute-binding protein 7 family. The complex comprises the extracytoplasmic solute receptor protein DctP, and the two transmembrane proteins DctQ and DctM.

It is found in the periplasm. Functionally, part of the tripartite ATP-independent periplasmic (TRAP) transport system DctPQM involved in C4-dicarboxylates uptake. Required for the utilization of succinate, fumarate, L-malate and alpha-ketoglutarate. Binds succinate and malate. This is C4-dicarboxylate-binding periplasmic protein DctP from Shewanella loihica (strain ATCC BAA-1088 / PV-4).